Consider the following 264-residue polypeptide: Taurine import ATP-binding protein TauB (264 aa).

One can recognise an ABC transporter domain in the interval 4 to 233 (LQLERISAQY…RYAAGESARA (230 aa)). ATP is bound at residue 38-45 (GPSGSGKT).

This sequence belongs to the ABC transporter superfamily. Taurine importer (TC 3.A.1.17.1) family. As to quaternary structure, the complex is composed of two ATP-binding proteins (TauB), two transmembrane proteins (TauC) and a solute-binding protein (TauA).

Its subcellular location is the cell inner membrane. It catalyses the reaction taurine(out) + ATP + H2O = taurine(in) + ADP + phosphate + H(+). Its function is as follows. Part of the ABC transporter complex TauABC involved in taurine import. Responsible for energy coupling to the transport system. The protein is Taurine import ATP-binding protein TauB of Pseudomonas fluorescens (strain ATCC BAA-477 / NRRL B-23932 / Pf-5).